Reading from the N-terminus, the 240-residue chain is Adenosylcobinamide-GDP ribazoletransferase (240 aa).

5 helical membrane passes run 31–51 (LLYY…ASHL), 62–81 (ALLL…DGLA), 109–129 (IAVV…WVLV), 133–153 (IGAQ…GLFL), and 179–199 (VLLV…LLAL).

This sequence belongs to the CobS family. The cofactor is Mg(2+).

It is found in the cell inner membrane. The enzyme catalyses alpha-ribazole + adenosylcob(III)inamide-GDP = adenosylcob(III)alamin + GMP + H(+). It carries out the reaction alpha-ribazole 5'-phosphate + adenosylcob(III)inamide-GDP = adenosylcob(III)alamin 5'-phosphate + GMP + H(+). It participates in cofactor biosynthesis; adenosylcobalamin biosynthesis; adenosylcobalamin from cob(II)yrinate a,c-diamide: step 7/7. Functionally, joins adenosylcobinamide-GDP and alpha-ribazole to generate adenosylcobalamin (Ado-cobalamin). Also synthesizes adenosylcobalamin 5'-phosphate from adenosylcobinamide-GDP and alpha-ribazole 5'-phosphate. The protein is Adenosylcobinamide-GDP ribazoletransferase of Pseudomonas putida (strain ATCC 47054 / DSM 6125 / CFBP 8728 / NCIMB 11950 / KT2440).